Consider the following 126-residue polypeptide: Glycine cleavage system H protein (126 aa).

The Lipoyl-binding domain occupies 24–106 (TITVGITDHA…YGEGWFFRMK (83 aa)). At Lys-65 the chain carries N6-lipoyllysine.

This sequence belongs to the GcvH family. As to quaternary structure, the glycine cleavage system is composed of four proteins: P, T, L and H. The cofactor is (R)-lipoate.

Functionally, the glycine cleavage system catalyzes the degradation of glycine. The H protein shuttles the methylamine group of glycine from the P protein to the T protein. This is Glycine cleavage system H protein from Psychrobacter arcticus (strain DSM 17307 / VKM B-2377 / 273-4).